Consider the following 760-residue polypeptide: Prolyl endopeptidase (760 aa).

Residues serine 609, aspartate 693, and histidine 730 each act as charge relay system in the active site.

The protein belongs to the peptidase S9A family.

The protein resides in the cytoplasm. It catalyses the reaction Hydrolysis of Pro-|-Xaa &gt;&gt; Ala-|-Xaa in oligopeptides.. Inhibited by chymostatin, Boc-Glu(NHO-Bz)-Pyrrolidide, Z-Pro-L-prolinal dimethyacetal and the peptide H-H-L-P-P-P-V-OH. Its function is as follows. Cleaves peptide bonds on the C-terminal side of prolyl residues within peptides that are up to approximately 30 amino acids long. This Dictyostelium discoideum (Social amoeba) protein is Prolyl endopeptidase (prep).